The primary structure comprises 601 residues: MDVHDLSEEAKRGVIHTSEESLDDLCVDFRGRPCRPSKHGGTRAALFVLGFQAFEMMAIAAVGNNLITYVFNEMHFPLSKSANLVTNFIGTVFLLSLLGGFLSDSYLGSFRTMLVFGVIEISGFILLSVQAHLPELRPPECNMKSTTIHCVEANGYKAATLYTALCLVALGSGCLKPNIISHGANQFQRKDLRKLSSFFNAAYFAFSMGQLIALTLLVWVQTHSGMDVGFGVSAAVMAAGMISLVAGTSFYRNKPPSGSIFTPIAQVFVAAITKRKQICPSNPNMVHQPSTDLVRVKPLLHSNKFRFLDKACIKTQGKAMESPWRLCTIEQVHQVKILLSVIPIFACTIIFNTILAQLQTFSVQQGSSMNTHITKTFQIPPASLQAIPYIILIFFVPLYETFFVPLARKLTGNDSGISPLQRIGTGLFLATFSMVAAALVEKKRRESFLEQNVMLSIFWIAPQFLIFGLSEMFTAVGLVEFFYKQSSQSMQSFLTAMTYCSYSFGFYLSSVLVSTVNRVTSSNGSGTKEGWLGDNDLNKDRLDHFYWLLASLSFINFFNYLFWSRWYSCDPSATHHSAEVNSLEALENGEIKDSTTEKPRI.

2 helical membrane-spanning segments follow: residues 44–64 and 82–102; these read AALFVLGFQAFEMMAIAAVGN and ANLVTNFIGTVFLLSLLGGFL. Thr-112 carries the phosphothreonine modification. 10 helical membrane passes run 113–133, 160–180, 198–218, 228–248, 337–357, 386–406, 420–440, 453–473, 493–513, and 544–564; these read MLVFGVIEISGFILLSVQAHL, TLYTALCLVALGSGCLKPNII, FFNAAYFAFSMGQLIALTLLV, VGFGVSAAVMAAGMISLVAGT, ILLSVIPIFACTIIFNTILAQ, AIPYIILIFFVPLYETFFVPL, LQRIGTGLFLATFSMVAAALV, VMLSIFWIAPQFLIFGLSEMF, FLTAMTYCSYSFGFYLSSVLV, and HFYWLLASLSFINFFNYLFWS.

Belongs to the major facilitator superfamily. Proton-dependent oligopeptide transporter (POT/PTR) (TC 2.A.17) family. As to expression, expressed in shoots, roots and stems.

It is found in the membrane. The chain is Protein NRT1/ PTR FAMILY 4.4 (NPF4.4) from Arabidopsis thaliana (Mouse-ear cress).